The chain runs to 364 residues: N-acetyl-gamma-glutamyl-phosphate reductase (364 aa).

The active site involves cysteine 157.

It belongs to the NAGSA dehydrogenase family. Type 1 subfamily.

Its subcellular location is the cytoplasm. The catalysed reaction is N-acetyl-L-glutamate 5-semialdehyde + phosphate + NADP(+) = N-acetyl-L-glutamyl 5-phosphate + NADPH + H(+). The protein operates within amino-acid biosynthesis; L-arginine biosynthesis; N(2)-acetyl-L-ornithine from L-glutamate: step 3/4. Catalyzes the NADPH-dependent reduction of N-acetyl-5-glutamyl phosphate to yield N-acetyl-L-glutamate 5-semialdehyde. The polypeptide is N-acetyl-gamma-glutamyl-phosphate reductase (Bifidobacterium longum (strain DJO10A)).